Consider the following 523-residue polypeptide: Metalloendopeptidase OMA1, mitochondrial (523 aa).

The transit peptide at 1–45 (MSFIYGLQSAARNCFFFRFNLLTNWRKCNTQAVTSRDFHQVKINH) directs the protein to the mitochondrion. The propeptide occupies 46-143 (IVNKSLGLGV…RSFHTSPRCQ (98 aa)). The Mitochondrial matrix segment spans residues 144 to 195 (AAPAPLLLMILKPAQKLLAIIVGRGIRKWWQALPPNKKELFKESLRKNKWKL). Positions 148–167 (PLLLMILKPAQKLLAIIVGR) are cardiolipin-binding. The stress-sensor region stretch occupies residues 165-195 (VGRGIRKWWQALPPNKKELFKESLRKNKWKL). Residues 196–216 (FLGLSSFGLLFVVFYFTHLEV) traverse the membrane as a helical segment. Zn(2+) is bound at residue His327. Residue Glu328 is part of the active site. His331 and Glu392 together coordinate Zn(2+). Cys407 and Cys465 are oxidised to a cystine.

It belongs to the peptidase M48 family. As to quaternary structure, homooligomer. Zn(2+) serves as cofactor. Post-translationally, autocatalytically cleaved in response to mitochondrial depolarization both at the N-terminus and C-terminus to generate the short active form (S-OMA1). Autocatalytic processing at the C-terminus takes place at residues 447-456. The S-OMA1 form is unstable. OMA1 pre-processing by AFG3L2 may participate in maturation before OMA1 autocatalytic cleavage. Degraded by YMEL1 in response to membrane depolarization. Protein turnover is regulated by prohibitin (PHB and PHB2), which promotes degradation of OMA1 in a cardiolipin-binding manner. In terms of processing, may form a redox-dependent disulfide bond. Exists in a semi-oxidized state and is activated by prolonged hypoxia.

The protein localises to the mitochondrion inner membrane. With respect to regulation, protease activity is activated upon autocatalytic cleavage in response to mitochondrial depolarization. In terms of biological role, metalloprotease that is part of the quality control system in the inner membrane of mitochondria. Activated in response to various mitochondrial stress, leading to the proteolytic cleavage of target proteins, such as OPA1, UQCC3 and DELE1. Involved in the fusion of the mitochondrial inner membranes by mediating cleavage of OPA1 at S1 position, generating the soluble OPA1 (S-OPA1), which cooperates with the membrane form (L-OPA1) to coordinate the fusion of mitochondrial inner membranes. Following stress conditions that induce loss of mitochondrial membrane potential, mediates cleavage of OPA1, leading to excess production of soluble OPA1 (S-OPA1) and negative regulation of mitochondrial fusion. Involved in mitochondrial safeguard in response to transient mitochondrial membrane depolarization (flickering) by catalyzing cleavage of OPA1, leading to excess production of S-OPA1, preventing mitochondrial hyperfusion. Also acts as a regulator of apoptosis: upon BAK and BAX aggregation, mediates cleavage of OPA1, leading to the remodeling of mitochondrial cristae and allowing the release of cytochrome c from mitochondrial cristae. In depolarized mitochondria, may also act as a backup protease for PINK1 by mediating PINK1 cleavage and promoting its subsequent degradation by the proteasome. May also cleave UQCC3 in response to mitochondrial depolarization. Also acts as an activator of the integrated stress response (ISR): in response to mitochondrial stress, mediates cleavage of DELE1 to generate the processed form of DELE1 (S-DELE1), which translocates to the cytosol and activates EIF2AK1/HRI to trigger the ISR. Its role in mitochondrial quality control is essential for regulating lipid metabolism as well as to maintain body temperature and energy expenditure under cold-stress conditions. Binds cardiolipin, possibly regulating its protein turnover. Required for the stability of the respiratory supercomplexes. The chain is Metalloendopeptidase OMA1, mitochondrial from Bos taurus (Bovine).